We begin with the raw amino-acid sequence, 523 residues long: 2-isopropylmalate synthase (523 aa).

The Pyruvate carboxyltransferase domain maps to 5–267; sequence VIIFDTTLRD…ETGINAKEIH (263 aa). Mn(2+)-binding residues include Asp-14, His-202, His-204, and Asn-238. Residues 392 to 523 form a regulatory domain region; the sequence is KLQQLVVHSD…QQEKQVLGGV (132 aa).

The protein belongs to the alpha-IPM synthase/homocitrate synthase family. LeuA type 1 subfamily. As to quaternary structure, homodimer. Mn(2+) serves as cofactor.

It is found in the cytoplasm. It carries out the reaction 3-methyl-2-oxobutanoate + acetyl-CoA + H2O = (2S)-2-isopropylmalate + CoA + H(+). It functions in the pathway amino-acid biosynthesis; L-leucine biosynthesis; L-leucine from 3-methyl-2-oxobutanoate: step 1/4. Catalyzes the condensation of the acetyl group of acetyl-CoA with 3-methyl-2-oxobutanoate (2-ketoisovalerate) to form 3-carboxy-3-hydroxy-4-methylpentanoate (2-isopropylmalate). The polypeptide is 2-isopropylmalate synthase (Shewanella piezotolerans (strain WP3 / JCM 13877)).